A 288-amino-acid chain; its full sequence is MKLSVYGKGGIGKSTTSCNISVALAKRGKKVLQIGCDPKHDSTFTLTGFLIPTIIDTLQEKDYHYEDIWPEDVIYKGYGGVDCVEAGGPPAGAGCGGYVVGETVKLLKELNAFDEYDVILFDVLGDVVCGGFAAPLNYSDYCMIVTDNGFDALFAANRIAASVREKARTHTLRLAGLIGNRTSKRDLINKYVEAVPMPVLEVLPLIEDIRVSRVKGKTLFEMAETDPSLQYVCNYYLNIADQILALPEGVVPSESPDRDLFALLSDFYLNPSKSHVMSEDEELDLMMV.

ATP is bound by residues 10–15 (GIGKST) and K39. Mg(2+) is bound at residue S14. Residues C95 and C129 each contribute to the [4Fe-4S] cluster site. An ATP-binding site is contributed by 180–181 (NR).

Belongs to the NifH/BchL/ChlL family. As to quaternary structure, homodimer. Protochlorophyllide reductase is composed of three subunits; ChlL, ChlN and ChlB. Requires [4Fe-4S] cluster as cofactor.

It carries out the reaction chlorophyllide a + oxidized 2[4Fe-4S]-[ferredoxin] + 2 ADP + 2 phosphate = protochlorophyllide a + reduced 2[4Fe-4S]-[ferredoxin] + 2 ATP + 2 H2O. It participates in porphyrin-containing compound metabolism; chlorophyll biosynthesis (light-independent). Functionally, component of the dark-operative protochlorophyllide reductase (DPOR) that uses Mg-ATP and reduced ferredoxin to reduce ring D of protochlorophyllide (Pchlide) to form chlorophyllide a (Chlide). This reaction is light-independent. The L component serves as a unique electron donor to the NB-component of the complex, and binds Mg-ATP. The chain is Light-independent protochlorophyllide reductase iron-sulfur ATP-binding protein from Trichodesmium erythraeum (strain IMS101).